We begin with the raw amino-acid sequence, 132 residues long: Small ribosomal subunit protein uS8 (132 aa).

It belongs to the universal ribosomal protein uS8 family. Part of the 30S ribosomal subunit. Contacts proteins S5 and S12.

One of the primary rRNA binding proteins, it binds directly to 16S rRNA central domain where it helps coordinate assembly of the platform of the 30S subunit. This chain is Small ribosomal subunit protein uS8, found in Xylella fastidiosa (strain M23).